We begin with the raw amino-acid sequence, 200 residues long: Large ribosomal subunit protein uL4 (200 aa).

The tract at residues 43 to 71 is disordered; that stretch reads RAQKTRAEVSGSGKKPWRQKGTGRARSGD.

The protein belongs to the universal ribosomal protein uL4 family. Part of the 50S ribosomal subunit.

In terms of biological role, one of the primary rRNA binding proteins, this protein initially binds near the 5'-end of the 23S rRNA. It is important during the early stages of 50S assembly. It makes multiple contacts with different domains of the 23S rRNA in the assembled 50S subunit and ribosome. Its function is as follows. Forms part of the polypeptide exit tunnel. This chain is Large ribosomal subunit protein uL4, found in Actinobacillus pleuropneumoniae serotype 5b (strain L20).